Here is a 160-residue protein sequence, read N- to C-terminus: Nucleotide-binding protein VV1_2655 (160 aa).

It belongs to the YajQ family.

Nucleotide-binding protein. The protein is Nucleotide-binding protein VV1_2655 of Vibrio vulnificus (strain CMCP6).